Reading from the N-terminus, the 404-residue chain is Probable tRNA sulfurtransferase (404 aa).

A THUMP domain is found at His-60–Asn-165. ATP contacts are provided by residues Met-183–Leu-184, His-208–Phe-209, Arg-265, Gly-287, and Gln-296.

It belongs to the ThiI family.

The protein localises to the cytoplasm. It carries out the reaction [ThiI sulfur-carrier protein]-S-sulfanyl-L-cysteine + a uridine in tRNA + 2 reduced [2Fe-2S]-[ferredoxin] + ATP + H(+) = [ThiI sulfur-carrier protein]-L-cysteine + a 4-thiouridine in tRNA + 2 oxidized [2Fe-2S]-[ferredoxin] + AMP + diphosphate. The enzyme catalyses [ThiS sulfur-carrier protein]-C-terminal Gly-Gly-AMP + S-sulfanyl-L-cysteinyl-[cysteine desulfurase] + AH2 = [ThiS sulfur-carrier protein]-C-terminal-Gly-aminoethanethioate + L-cysteinyl-[cysteine desulfurase] + A + AMP + 2 H(+). It participates in cofactor biosynthesis; thiamine diphosphate biosynthesis. Its function is as follows. Catalyzes the ATP-dependent transfer of a sulfur to tRNA to produce 4-thiouridine in position 8 of tRNAs, which functions as a near-UV photosensor. Also catalyzes the transfer of sulfur to the sulfur carrier protein ThiS, forming ThiS-thiocarboxylate. This is a step in the synthesis of thiazole, in the thiamine biosynthesis pathway. The sulfur is donated as persulfide by IscS. The polypeptide is Probable tRNA sulfurtransferase (Streptococcus agalactiae serotype Ia (strain ATCC 27591 / A909 / CDC SS700)).